The chain runs to 473 residues: Glutamate-1-semialdehyde 2,1-aminomutase, chloroplastic (473 aa).

Residues 1 to 37 constitute a chloroplast transit peptide; sequence MSATLTGSGTALGFSCSSKISKRVSSSPSTRCSIKMS. K313 is subject to N6-(pyridoxal phosphate)lysine.

Belongs to the class-III pyridoxal-phosphate-dependent aminotransferase family. HemL subfamily. As to quaternary structure, homodimer. Requires pyridoxal 5'-phosphate as cofactor.

The protein resides in the plastid. The protein localises to the chloroplast. The enzyme catalyses (S)-4-amino-5-oxopentanoate = 5-aminolevulinate. It functions in the pathway porphyrin-containing compound metabolism; protoporphyrin-IX biosynthesis; 5-aminolevulinate from L-glutamyl-tRNA(Glu): step 2/2. The protein operates within porphyrin-containing compound metabolism; chlorophyll biosynthesis. The protein is Glutamate-1-semialdehyde 2,1-aminomutase, chloroplastic (GSA) of Brassica napus (Rape).